The chain runs to 181 residues: ECF RNA polymerase sigma factor RpoE (181 aa).

The tract at residues 29–96 is sigma-70 factor domain-2; the sequence is LFQHFAPKVK…RRIDGLRKDR (68 aa). The Interaction with polymerase core subunit RpoC signature appears at 53 to 56; that stretch reads ECAQ. Residues 129-178 form a sigma-70 factor domain-4 region; that stretch reads AIARLPEAQRALIERAFFGDLTHRELAAETGLPLGTIKSRIRLALDRLRQ. Residues 151–170 constitute a DNA-binding region (H-T-H motif); it reads HRELAAETGLPLGTIKSRIR.

It belongs to the sigma-70 factor family. ECF subfamily. As to quaternary structure, interacts transiently with the RNA polymerase catalytic core formed by RpoA, RpoB, RpoC and RpoZ (2 alpha, 1 beta, 1 beta' and 1 omega subunit) to form the RNA polymerase holoenzyme that can initiate transcription. Forms a 1:1 complex (via sigma-70 factor domain 4) with anti-sigma factor ChrR; this inhibits the interaction of RpoE with the RNA polymerase catalytic core.

Sigma factors are initiation factors that promote the attachment of RNA polymerase to specific initiation sites and are then released. Extracytoplasmic function (ECF) sigma factors are held in an inactive form by a cognate anti-sigma factor until released. Sigma-E controls a transcriptional response to singlet oxygen, a by-product of photosynthesis; its continuous activity requires constant exposure to singlet oxygen. The regulon has about 180 genes that protect against or repair damage induced by singlet oxygen, including itself and rpoH2, a heat shock-responsive sigma factor. The chain is ECF RNA polymerase sigma factor RpoE (rpoE) from Cereibacter sphaeroides (strain ATCC 17023 / DSM 158 / JCM 6121 / CCUG 31486 / LMG 2827 / NBRC 12203 / NCIMB 8253 / ATH 2.4.1.) (Rhodobacter sphaeroides).